Consider the following 283-residue polypeptide: MKRILIVTGQSGSGKSSALQVLEDLGYYCIDNLPLALLPEIVAKLDHENNLEQLALGVDVRSTRADMQEFDHVFEQLQKHGTVDVIYLTTQDQDLIARFSASRRPHPLANRFKSLLQCIHEEKQLLIPIQFRATVHIDTTDKSVHDLKHILLSKLGQSDNLIVILQSFGYKHGIPLDADYVFDVRHLPNPHWDLELRRFSGLDEPVKQFLEASPQANEMFEDILHFLKKWLPAFAEGHRHYMTISIGCTGGQHRSVYMVDRLKQALEAEWSVQVLHREMKHWS.

9–16 serves as a coordination point for ATP; it reads GQSGSGKS. Position 59 to 62 (59 to 62) interacts with GTP; that stretch reads DVRS.

This sequence belongs to the RapZ-like family.

Displays ATPase and GTPase activities. The protein is Nucleotide-binding protein ABBFA_002973 of Acinetobacter baumannii (strain AB307-0294).